Reading from the N-terminus, the 266-residue chain is GATA-type zinc finger protein 1 (266 aa).

Disordered regions lie at residues 1–31, 106–129, and 171–191; these read MEAA…KSRP, TQCP…PRKQ, and CSQK…SSEA. The segment covering 106 to 121 has biased composition (polar residues); the sequence is TQCPNLEISSATSPAS. The GATA-type zinc finger occupies 197 to 221; it reads CASCRTQRTPLWRDAEDGTPLCNAC.

Specifically expressed in adult testis and ovary. Expressed at high levels in the somatic cells of the developing gonads, including Leydig cells in the testes and granulosa cells in the ovaries.

It localises to the nucleus. In terms of biological role, transcriptional regulator that plays a key role in germ cell development. Determines the oogenic fate by activating key genes for the oogenic program and meiotic prophase entry. Acts downstream of bone morphogenetic protein (BMP) by regulating expression of genes required for the oogenic programs, which are repressed by Polycomb activities in sexually uncommitted germ cells. Regulates expression of STRA8, a central downstream effector for the meiotic program. Acts independently of retinoic acid (RA). In males, not required for germ-cell sex determination, but required to allow the spermatogonia to efficiently accomplish the meiotic prophase. In Mus musculus (Mouse), this protein is GATA-type zinc finger protein 1.